A 468-amino-acid polypeptide reads, in one-letter code: KASVGFKAGVKDYKLTYYTPEYKTLDTDILAAFRVTPQPGVPPEEAGAAVAAESSTGTWTTVWTDGLTTLDRYKGRCYHIEPVPGEDNQYIAYVAYPLDLFEEGSVTNMFTSIVGNVFGFKALRALRLEDLRIPPAYIKTFQGPPHGIQVERDKLNKYGRPLLGCTIKPKLGLSAKNYGRAVYECLRGGLDFTKDDENVNSQPFMRWRDRFVFCAEALYKAQAETGEIKGHYLNAPAGTSEEMMKRAIFARELGVPIVMHDYLTGGFTANTSLAHYCRDNGLLLHIHRAMHAVIDRQKNHGMHFRVLAKALRMSGGDHIHAGXVVGKLEGEREITLGFVDLLRDDYIEKDRSRGIYFTQDXVSMPGVLPVASGGIHVWHMPALTEIFGDDSVLQFGGGTLGHPWGNAPGAVANRVALEACVQARNEGRDLAREGNEIIRAASKWSPELAAACEVWKEIKFEFPAMDTL.

K7 is modified (N6,N6,N6-trimethyllysine). Substrate is bound by residues N116 and T166. K168 functions as the Proton acceptor in the catalytic mechanism. K170 serves as a coordination point for substrate. The Mg(2+) site is built by K194, D196, and E197. Residue K194 is modified to N6-carboxylysine. H287 serves as the catalytic Proton acceptor. Substrate contacts are provided by R288, H320, and S372.

It belongs to the RuBisCO large chain family. Type I subfamily. As to quaternary structure, heterohexadecamer of 8 large chains and 8 small chains. The cofactor is Mg(2+).

It is found in the plastid. It localises to the chloroplast. The enzyme catalyses 2 (2R)-3-phosphoglycerate + 2 H(+) = D-ribulose 1,5-bisphosphate + CO2 + H2O. It catalyses the reaction D-ribulose 1,5-bisphosphate + O2 = 2-phosphoglycolate + (2R)-3-phosphoglycerate + 2 H(+). Functionally, ruBisCO catalyzes two reactions: the carboxylation of D-ribulose 1,5-bisphosphate, the primary event in carbon dioxide fixation, as well as the oxidative fragmentation of the pentose substrate in the photorespiration process. Both reactions occur simultaneously and in competition at the same active site. The chain is Ribulose bisphosphate carboxylase large chain from Couroupita guianensis (Cannonball tree).